We begin with the raw amino-acid sequence, 265 residues long: 14-3-3-like protein GF14-D (265 aa).

Residues aspartate 244–glutamine 265 form a disordered region. Residues aspartate 251–glutamine 265 show a composition bias toward basic and acidic residues.

The protein belongs to the 14-3-3 family. Interacts with BZR1. Interacts with ABI5.

Functionally, is associated with a DNA binding complex that binds to the G box, a well-characterized cis-acting DNA regulatory element found in plant genes. The chain is 14-3-3-like protein GF14-D (GF14D) from Oryza sativa subsp. japonica (Rice).